Here is a 569-residue protein sequence, read N- to C-terminus: MVETTGISDQTKKVLIGVAAAATVAGVGYLVYKSFGGSDLERDLEEIKALGNLKFKEKQYDSALEAFTKGVEKAGPNSSDQIVAMLYQNRAACREKVGHSPFDILNDCMAALKVDKKYTKAYLRAAKALNDVGKKQDALAYLLAAFTLDSSLNKTNFEFFGKLLAIEPMSDCHIGKPLKIEDVKPQPVALFRIQQWCDTWDILDLFKTDLTRFEPEVLSEDQKQYQLALEKFKKGKYEELIDLLTEENSYPPAMILRGKMLSYSTDPNEATRYIDKVGAKINELIGSEEDEERKKLMRDAFDILKIELMYTMADLDKFLESVPKDDKERLFKLYSFASIFVVIRLNHFYSLKIWFQYNGCVLDTAVTNHEQQMMADTNNANRLLTEAEKNGTLTPHLSMIVTFLKLCTSEDYADVHRRIREMEELAESRSTHFNLVLMSKVYMMTNNEESSKKLLEEAARITTRYLVPSRHLQTADLHVHKPEAERLRLTTESANAAIAVDPFNFSAHVLHLLGTNGPEPMIKKENYERAMESIRNAALFAPPRELLMLKRMIPLMNAKKRAAEMLDMY.

At 1-12 (MVETTGISDQTK) the chain is on the mitochondrial intermembrane side. The helical transmembrane segment at 13-32 (KVLIGVAAAATVAGVGYLVY) threads the bilayer. Topologically, residues 33-569 (KSFGGSDLER…KRAAEMLDMY (537 aa)) are cytoplasmic. TPR repeat units follow at residues 44-77 (LEEIKALGNLKFKEKQYDSALEAFTKGVEKAGPN), 119-152 (TKAYLRAAKALNDVGKKQDALAYLLAAFTLDSSL), 221-254 (DQKQYQLALEKFKKGKYEELIDLLTEENSYPPAM), and 510-544 (LHLLGTNGPEPMIKKENYERAMESIRNAALFAPPR).

It belongs to the Tom70 family. In terms of assembly, forms part of the preprotein translocase complex of the outer mitochondrial membrane (TOM complex). In terms of tissue distribution, expressed in body wall muscle cells, the pharynx and structures in the tail.

The protein resides in the mitochondrion outer membrane. Receptor that accelerates the import of all mitochondrial precursor proteins. In Caenorhabditis elegans, this protein is Mitochondrial import receptor subunit tomm-70.